The primary structure comprises 125 residues: Large ribosomal subunit protein bL20 (125 aa).

This sequence belongs to the bacterial ribosomal protein bL20 family.

Functionally, binds directly to 23S ribosomal RNA and is necessary for the in vitro assembly process of the 50S ribosomal subunit. It is not involved in the protein synthesizing functions of that subunit. The protein is Large ribosomal subunit protein bL20 of Thermobifida fusca (strain YX).